The sequence spans 873 residues: Serine/threonine-protein phosphatase 4 regulatory subunit 4 (873 aa).

3 HEAT repeats span residues 213–251 (ILPL…TKSV), 252–290 (VLPE…RSQT), and 392–427 (NFHM…SKLL). Residues 686-720 (QKKFYEKDLLDQEKEREELLLLEMEQLEKEKQQND) adopt a coiled-coil conformation. Residues 713–737 (EKEKQQNDGRPMSDKMFEKKRRDTK) show a composition bias toward basic and acidic residues. Positions 713–766 (EKEKQQNDGRPMSDKMFEKKRRDTKTPTQSLPKNIPISVPGPSSVTPSTSKEIK) are disordered. The segment covering 747–762 (IPISVPGPSSVTPSTS) has biased composition (low complexity). Ser775 carries the phosphoserine modification. Residue Thr797 is modified to Phosphothreonine. The span at 822 to 858 (TRNASSVPSSFSPNTPLPSTSRGTGNSVDPKSSGSKD) shows a compositional bias: polar residues. Residues 822–873 (TRNASSVPSSFSPNTPLPSTSRGTGNSVDPKSSGSKDTQPRKATLKSRKSNP) are disordered. Residues 864 to 873 (ATLKSRKSNP) are compositionally biased toward basic residues.

Serine/threonine-protein phosphatase 4 (PP4) occurs in different assemblies of the catalytic and one or more regulatory subunits. Component of the PP4 complex PPP4C-PPP4R4.

The protein resides in the cytoplasm. Its function is as follows. Putative regulatory subunit of serine/threonine-protein phosphatase 4. The polypeptide is Serine/threonine-protein phosphatase 4 regulatory subunit 4 (PPP4R4) (Homo sapiens (Human)).